The chain runs to 547 residues: Serine beta-lactamase-like protein LACTB, mitochondrial (547 aa).

The transit peptide at 1–115 (MYRLMSAVTA…RAIESSRDLL (115 aa)) directs the protein to the mitochondrion. Residues 62–83 (GAAPAQSPAAPDPEASPLAEPP) are compositionally biased toward low complexity. Residues 62 to 96 (GAAPAQSPAAPDPEASPLAEPPQEQSLAPWSPQTP) form a disordered region. Ser-164 serves as the catalytic Acyl-ester intermediate. N6-succinyllysine is present on residues Lys-283 and Lys-284. N6-acetyllysine occurs at positions 297 and 342.

This sequence belongs to the peptidase S12 family. As to expression, expressed predominantly in skeletal muscle.

It localises to the mitochondrion. Mitochondrial serine protease that acts as a regulator of mitochondrial lipid metabolism. Acts by decreasing protein levels of PISD, a mitochondrial enzyme that converts phosphatidylserine (PtdSer) to phosphatidylethanolamine (PtdEtn), thereby affecting mitochondrial lipid metabolism. It is unclear whether it acts directly by mediating proteolysis of PISD or by mediating proteolysis of another lipid metabolism protein. Acts as a tumor suppressor that has the ability to inhibit proliferation of multiple types of breast cancer cells: probably by promoting decreased levels of PISD, thereby affecting mitochondrial lipid metabolism. The chain is Serine beta-lactamase-like protein LACTB, mitochondrial from Homo sapiens (Human).